The following is a 205-amino-acid chain: Probable GTP-binding protein EngB (205 aa).

An EngB-type G domain is found at 22–194; that stretch reads ELPEIAFAGR…WESILDLCEI (173 aa). Residues 30-37, 57-61, 75-78, 142-145, and 173-175 each bind GTP; these read GRSNVGKS, GRTQL, DLPG, TKAD, and FSA. Mg(2+) contacts are provided by serine 37 and threonine 59.

Belongs to the TRAFAC class TrmE-Era-EngA-EngB-Septin-like GTPase superfamily. EngB GTPase family. It depends on Mg(2+) as a cofactor.

Functionally, necessary for normal cell division and for the maintenance of normal septation. In Desulfatibacillum aliphaticivorans, this protein is Probable GTP-binding protein EngB.